Consider the following 430-residue polypeptide: Sphingosine-1-phosphate phosphatase 1 (430 aa).

The disordered stretch occupies residues 34–100; it reads GSPKAGEDAE…PRRAGSLRRN (67 aa). Ser101 carries the post-translational modification Phosphoserine. Thr103 carries the phosphothreonine modification. Helical transmembrane passes span 121 to 141, 152 to 172, 193 to 213, and 216 to 236; these read FCFGTELGNELFYIIFFPFWI, LVIIWVLVMYLGQCTKDIIRW, MPSTHAMSGTAIPIAMILLTY, and WQYPLIYGLILIPCWSSLVCL. Residues 167-175 are phosphatase sequence motif I; that stretch reads KDIIRWPRP. Residues 194 to 197 form a phosphatase sequence motif II region; it reads PSTH. The Proton donor role is filled by His197. The interval 237–248 is phosphatase sequence motif III; it reads SRIYMGMHSILD. His244 acts as the Nucleophile in catalysis. 5 consecutive transmembrane segments (helical) span residues 246-266, 279-299, 311-331, 348-368, and 409-429; these read ILDVIAGFLYTILILIIFYPL, YAPLIIIGLHLILGIFSFTLD, ILGSGAGIACGSHAAYNLGIS, VTLFGKAILRVVIGMLLVLFV, and YGTVGFSITFLIPYIFSFIGI.

The protein belongs to the type 2 lipid phosphate phosphatase family.

It is found in the endoplasmic reticulum membrane. It localises to the cell membrane. It carries out the reaction sphinganine 1-phosphate + H2O = sphinganine + phosphate. It catalyses the reaction sphing-4-enine 1-phosphate + H2O = sphing-4-enine + phosphate. Specifically dephosphorylates sphingosine 1-phosphate (S1P), dihydro-S1P, and phyto-S1P. Does not act on ceramide 1-phosphate, lysophosphatidic acid or phosphatidic acid. Sphingosine-1-phosphate phosphatase activity is needed for efficient recycling of sphingosine into the sphingolipid synthesis pathway. Regulates the intracellular levels of the bioactive sphingolipid metabolite S1P that regulates diverse biological processes acting both as an extracellular receptor ligand or as an intracellular second messenger. Involved in efficient ceramide synthesis from exogenous sphingoid bases. Converts S1P to sphingosine, which is readily metabolized to ceramide via ceramide synthase. In concert with sphingosine kinase 2 (SphK2), recycles sphingosine into ceramide through a phosphorylation/dephosphorylation cycle. Regulates endoplasmic-to-Golgi trafficking of ceramides, resulting in the regulation of ceramide levels in the endoplasmic reticulum, preferentially long-chain ceramide species, and influences the anterograde membrane transport of both ceramide and proteins from the endoplasmic reticulum to the Golgi apparatus. The modulation of intracellular ceramide levels in turn regulates apoptosis. Via S1P levels, modulates resting tone, intracellular Ca(2+) and myogenic vasoconstriction in resistance arteries. Also involved in unfolded protein response (UPR) and ER stress-induced autophagy via regulation of intracellular S1P levels. Involved in the regulation of epidermal homeostasis and keratinocyte differentiation. This chain is Sphingosine-1-phosphate phosphatase 1, found in Rattus norvegicus (Rat).